We begin with the raw amino-acid sequence, 2452 residues long: Lovastatin diketide synthase lovF (2452 aa).

The Ketosynthase family 3 (KS3) domain maps to 10–381; the sequence is PAPIAVVGMG…GANAHAIVER (372 aa). Catalysis depends on for beta-ketoacyl synthase activity residues C173, H308, and H343. Residues 496-790 are malonyl-CoA:ACP transacylase (MAT) domain; that stretch reads VFTGQGAQWF…PYLSCLSRGK (295 aa). The For malonyltransferase activity role is filled by S555. Positions 861 to 998 are N-terminal hotdog fold; that stretch reads HDLIGLQEPL…GLVRVDMDQP (138 aa). The dehydratase (DH) domain stretch occupies residues 861–1166; the sequence is HDLIGLQEPL…LEGLVFQSLG (306 aa). The PKS/mFAS DH domain maps to 861–1171; sequence HDLIGLQEPL…FQSLGASLGT (311 aa). H893 functions as the Proton acceptor; for dehydratase activity in the catalytic mechanism. The segment at 997 to 1017 is disordered; sequence QPASSLSNPQRADPRPWSRKT. Positions 1012–1171 are C-terminal hotdog fold; sequence PWSRKTAPQD…FQSLGASLGT (160 aa). D1079 serves as the catalytic Proton donor; for dehydratase activity. The segment at 1343–1528 is methyltransferase (CMet) domain; sequence ELVRLCCHKN…RDCDSDEFYM (186 aa). Positions 1745-2064 are enoylreductase (ER) domain; sequence GLLDSLYFRK…SGQHVGKIVV (320 aa). Residues 2088–2260 are ketoreductase (KR) domain; the sequence is SYLVAGGLGG…AVTIDLGMVQ (173 aa). The region spanning 2373–2450 is the Carrier domain; the sequence is ASIAVIMEAM…KVAEVVLQRY (78 aa). At S2410 the chain carries O-(pantetheine 4'-phosphoryl)serine.

Interacts with LovD. Pantetheine 4'-phosphate serves as cofactor.

The catalysed reaction is holo-[2-methylbutanoate polyketide synthase] + 2 malonyl-CoA + S-adenosyl-L-methionine + 2 NADPH + 3 H(+) = (S)-2-methylbutanoyl-[2-methylbutanoate polyketide synthase] + S-adenosyl-L-homocysteine + 2 CO2 + 2 NADP(+) + 2 CoA + H2O. The protein operates within polyketide biosynthesis; lovastatin biosynthesis. Lovastatin diketide synthase; part of the gene cluster that mediates the biosynthesis of lovastatin (also known as mevinolin, mevacor or monacolin K), a hypolipidemic inhibitor of (3S)-hydroxymethylglutaryl-coenzyme A (HMG-CoA) reductase (HMGR). The first step in the biosynthesis of lovastatin is the production of dihydromonacolin L acid by the lovastatin nonaketide synthase lovB and the trans-acting enoyl reductase lovC via condensation of one acetyl-CoA unit and 8 malonyl-CoA units. Dihydromonacolin L acid is released from lovB by the thioesterase lovG. Next, dihydromonacolin L acid is oxidized by the dihydromonacolin L monooxygenase lovA twice to form monacolin J acid. The 2-methylbutyrate moiety of lovastatin is synthesized by the lovastatin diketide synthase lovF via condensation of one acetyl-CoA unit and one malonyl-CoA unit. Finally, the covalent attachment of this moiety to monacolin J acid is catalyzed by the transesterase lovD to yield lovastatin. LovD has broad substrate specificity and can also convert monacolin J to simvastatin using alpha-dimethylbutanoyl-S-methyl-3-mercaptopropionate (DMB-S-MMP) as the thioester acyl donor, and can also catalyze the reverse reaction and function as hydrolase in vitro. LovD has much higher activity with LovF-bound 2-methylbutanoate than with free diketide substrates. This Aspergillus terreus (strain NIH 2624 / FGSC A1156) protein is Lovastatin diketide synthase lovF.